Consider the following 573-residue polypeptide: Sulfate adenylyltransferase (573 aa).

The N-terminal stretch occupies residues 1–169 (MANPPHGGIL…VEAVNKLNHY (169 aa)). The segment at 170 to 394 (DYVGLRFTPA…LRESNPPRSK (225 aa)) is catalytic. Q197 contributes to the sulfate binding site. ATP contacts are provided by residues 197 to 200 (QTRN) and 291 to 294 (GRDH). Residues T198, R199, and N200 contribute to the active site. Position 199 (R199) interacts with sulfate. Position 295 (A295) interacts with sulfate. L333 contributes to the ATP binding site. Residues 395–573 (QGFTVFLTGY…LESQGFLEKA (179 aa)) form an allosteric regulation domain; adenylyl-sulfate kinase-like region. 3'-phosphoadenylyl sulfate is bound by residues 434–437 (DTVR), R451, 477–478 (IA), and R515.

It in the N-terminal section; belongs to the sulfate adenylyltransferase family. This sequence in the C-terminal section; belongs to the APS kinase family. In terms of assembly, homohexamer. Dimer of trimers.

It localises to the cytoplasm. The enzyme catalyses sulfate + ATP + H(+) = adenosine 5'-phosphosulfate + diphosphate. It functions in the pathway sulfur metabolism; hydrogen sulfide biosynthesis; sulfite from sulfate: step 1/3. Allosterically inhibited by 3'-phosphoadenosine 5'-phosphosulfate (PAPS). Catalyzes the first intracellular reaction of sulfate assimilation, forming adenosine-5'-phosphosulfate (APS) from inorganic sulfate and ATP. Plays an important role in sulfate activation as a component of the biosynthesis pathway of sulfur-containing amino acids. In Coccidioides immitis (strain RS) (Valley fever fungus), this protein is Sulfate adenylyltransferase.